Here is a 253-residue protein sequence, read N- to C-terminus: Ferritin-2, chloroplastic (253 aa).

The N-terminal 45 residues, methionine 1 to alanine 45, are a transit peptide targeting the chloroplast. An extension peptide (EP) region spans residues alanine 46–arginine 82. The 154-residue stretch at histidine 83–glycine 236 folds into the Ferritin-like diiron domain. The Fe cation site is built by glutamate 100, glutamate 135, histidine 138, glutamate 184, and glutamine 218.

It belongs to the ferritin family. As to quaternary structure, oligomer of 24 subunits. There are two types of subunits: L (light) chain and H (heavy) chain. The major chain can be light or heavy, depending on the species and tissue type. The functional molecule forms a roughly spherical shell with a diameter of 12 nm and contains a central cavity into which the insoluble mineral iron core is deposited.

It localises to the plastid. It is found in the chloroplast. The enzyme catalyses 4 Fe(2+) + O2 + 4 H(+) = 4 Fe(3+) + 2 H2O. Its function is as follows. Stores iron in a soluble, non-toxic, readily available form. Important for iron homeostasis. Has ferroxidase activity. Iron is taken up in the ferrous form and deposited as ferric hydroxides after oxidation. In Arabidopsis thaliana (Mouse-ear cress), this protein is Ferritin-2, chloroplastic (FER2).